The primary structure comprises 60 residues: Potassium channel toxin ImKTx88 (60 aa).

A signal peptide spans 1 to 22 (MSNFSVFLIALLFCSVFILSEA). 3 disulfide bridges follow: Cys30/Cys51, Cys36/Cys56, and Cys40/Cys58.

The protein belongs to the short scorpion toxin superfamily. Potassium channel inhibitor family. As to expression, expressed by the venom gland.

It is found in the secreted. Its function is as follows. Recombinant toxin selectively inhibits Kv1.3/KCNA3 potassium channels with an IC(50) of 91 pM. This Isometrus maculatus (Lesser brown scorpion) protein is Potassium channel toxin ImKTx88.